The primary structure comprises 160 residues: Phosphopantetheine adenylyltransferase (160 aa).

Residue serine 8 participates in substrate binding. ATP contacts are provided by residues 8–9 and histidine 16; that span reads SF. Lysine 40, threonine 72, and arginine 86 together coordinate substrate. Residues 87–89, glutamate 97, and 122–128 contribute to the ATP site; these read GLR and YSFLSSS.

It belongs to the bacterial CoaD family. In terms of assembly, homohexamer. The cofactor is Mg(2+).

The protein localises to the cytoplasm. It carries out the reaction (R)-4'-phosphopantetheine + ATP + H(+) = 3'-dephospho-CoA + diphosphate. It participates in cofactor biosynthesis; coenzyme A biosynthesis; CoA from (R)-pantothenate: step 4/5. Functionally, reversibly transfers an adenylyl group from ATP to 4'-phosphopantetheine, yielding dephospho-CoA (dPCoA) and pyrophosphate. This is Phosphopantetheine adenylyltransferase from Synechococcus sp. (strain CC9311).